A 446-amino-acid polypeptide reads, in one-letter code: Chromosomal replication initiator protein DnaA (446 aa).

Positions 1–81 (MENISDLWNS…AKLAIRFIIP (81 aa)) are domain I, interacts with DnaA modulators. Residues 81–109 (PQSQAEEDIDLPPVKPNPAQDDSAHLPQS) form a domain II region. Residues 110–326 (MLNPKYTFDT…GALIRVVAYS (217 aa)) form a domain III, AAA+ region region. 4 residues coordinate ATP: G154, G156, K157, and T158. The domain IV, binds dsDNA stretch occupies residues 327–446 (SLINKDINAD…QVEEINGILK (120 aa)).

The protein belongs to the DnaA family. In terms of assembly, oligomerizes as a right-handed, spiral filament on DNA at oriC.

It localises to the cytoplasm. Plays an essential role in the initiation and regulation of chromosomal replication. ATP-DnaA binds to the origin of replication (oriC) to initiate formation of the DNA replication initiation complex once per cell cycle. Binds the DnaA box (a 9 base pair repeat at the origin) and separates the double-stranded (ds)DNA. Forms a right-handed helical filament on oriC DNA; dsDNA binds to the exterior of the filament while single-stranded (ss)DNA is stabiized in the filament's interior. The ATP-DnaA-oriC complex binds and stabilizes one strand of the AT-rich DNA unwinding element (DUE), permitting loading of DNA polymerase. After initiation quickly degrades to an ADP-DnaA complex that is not apt for DNA replication. Binds acidic phospholipids. The polypeptide is Chromosomal replication initiator protein DnaA (Bacillus cereus (strain B4264)).